The chain runs to 744 residues: Receptor-like serine/threonine-protein kinase ALE2 (744 aa).

Residues 1 to 19 form the signal peptide; that stretch reads MRNFAMLLLLILLLHSLAS. The Extracellular segment spans residues 20–260; the sequence is FPICFARLFP…SQGIGFRTIA (241 aa). Over residues 59–68 the composition is skewed to pro residues; sequence PAFSPNPSRI. The tract at residues 59–79 is disordered; it reads PAFSPNPSRIPPLRHKGHHRH. Over residues 70 to 79 the composition is skewed to basic residues; sequence PLRHKGHHRH. Asn87, Asn186, Asn204, Asn243, and Asn249 each carry an N-linked (GlcNAc...) asparagine glycan. A helical membrane pass occupies residues 261-281; that stretch reads IIALSGFVLILVLVGAISIIV. Topologically, residues 282-744 are cytoplasmic; sequence KWKKIGKSSN…HLWSGNGDWL (463 aa). The Protein kinase domain occupies 349–619; sequence FSAKRVLGEG…GEVVQALKLI (271 aa). ATP is bound by residues 355-363 and Lys377; that span reads LGEGGFGRV. The active-site Proton acceptor is the Asp470. 2 disordered regions span residues 681–705 and 722–744; these read EDME…PNRS and GSMS…GDWL.

Belongs to the protein kinase superfamily. Ser/Thr protein kinase family. In terms of processing, autophosphorylated and phosphorylated by ACR4.

It localises to the cell membrane. It carries out the reaction L-seryl-[protein] + ATP = O-phospho-L-seryl-[protein] + ADP + H(+). It catalyses the reaction L-threonyl-[protein] + ATP = O-phospho-L-threonyl-[protein] + ADP + H(+). In terms of biological role, required during the differentiation of the protoderm into shoots epidermis and cuticle. In Arabidopsis thaliana (Mouse-ear cress), this protein is Receptor-like serine/threonine-protein kinase ALE2 (ALE2).